We begin with the raw amino-acid sequence, 363 residues long: NAD(P)H-quinone oxidoreductase subunit 1, chloroplastic (363 aa).

The next 7 helical transmembrane spans lie at 30-50, 104-124, 129-149, 248-268, 269-289, 300-320, and 336-356; these read FIPI…IVWL, IAVI…HLVL, IGVF…LMSG, YSGI…LVSS, LFVT…IFVF, VFEP…FLFI, and LLNL…LLTT.

This sequence belongs to the complex I subunit 1 family. In terms of assembly, NDH is composed of at least 16 different subunits, 5 of which are encoded in the nucleus.

It localises to the plastid. The protein resides in the chloroplast thylakoid membrane. It catalyses the reaction a plastoquinone + NADH + (n+1) H(+)(in) = a plastoquinol + NAD(+) + n H(+)(out). It carries out the reaction a plastoquinone + NADPH + (n+1) H(+)(in) = a plastoquinol + NADP(+) + n H(+)(out). Functionally, NDH shuttles electrons from NAD(P)H:plastoquinone, via FMN and iron-sulfur (Fe-S) centers, to quinones in the photosynthetic chain and possibly in a chloroplast respiratory chain. The immediate electron acceptor for the enzyme in this species is believed to be plastoquinone. Couples the redox reaction to proton translocation, and thus conserves the redox energy in a proton gradient. This Morus indica (Mulberry) protein is NAD(P)H-quinone oxidoreductase subunit 1, chloroplastic.